A 54-amino-acid chain; its full sequence is Ovomucoid (54 aa).

The region spanning 4–54 (VDCSGYPTHACTLELKPLCGSDNQTYSNKCGFCNAVAQSNGTLTLSHFGKC) is the Kazal-like domain. Cystine bridges form between Cys-6–Cys-36, Cys-14–Cys-33, and Cys-22–Cys-54. A glycan (N-linked (GlcNAc...) asparagine) is linked at Asn-43.

It localises to the secreted. The sequence is that of Ovomucoid from Leipoa ocellata (Malleefowl).